The primary structure comprises 444 residues: Deoxyguanosinetriphosphate triphosphohydrolase-like protein (444 aa).

Residues 66-259 form the HD domain; that stretch reads RLTHSLEAAQ…MELADDIAYG (194 aa).

Belongs to the dGTPase family. Type 2 subfamily.

This is Deoxyguanosinetriphosphate triphosphohydrolase-like protein from Vibrio campbellii (strain ATCC BAA-1116).